A 1342-amino-acid polypeptide reads, in one-letter code: DNA-directed RNA polymerase subunit beta (1342 aa).

This sequence belongs to the RNA polymerase beta chain family. In terms of assembly, the RNAP catalytic core consists of 2 alpha, 1 beta, 1 beta' and 1 omega subunit. When a sigma factor is associated with the core the holoenzyme is formed, which can initiate transcription.

It catalyses the reaction RNA(n) + a ribonucleoside 5'-triphosphate = RNA(n+1) + diphosphate. In terms of biological role, DNA-dependent RNA polymerase catalyzes the transcription of DNA into RNA using the four ribonucleoside triphosphates as substrates. The chain is DNA-directed RNA polymerase subunit beta from Vibrio parahaemolyticus serotype O3:K6 (strain RIMD 2210633).